We begin with the raw amino-acid sequence, 321 residues long: MSSKKSLVQSLFNISKTYSRISGLTRMRPTKSGGIPPDAGDSGIRRRFLHKRAFFSPEIVPKGGNLMEKLRELTLSNNNRIRLDEMLPPPSPKKSSPEFFPAVTVEDVKKLMRAAEMELVKSKLREIGKNWVPYSEFVRVCGEYSSDPEQGNRVANMLDEAGNVIVLGKLVCLKPEELTSAMAGLIPTLEPSLDAETRQEFEQLEIIKSDIDKRADDLVRKELWAGLGLIMAQTVGFFRLTFWELSWDVMEPICFYVTSTYFMAGYAFFLRTSKEPSFEGFYKSRFETKQKRLIKMLDFDIDRFTKLQKMHRPNLTKSGRC.

The transit peptide at 1–56 (MSSKKSLVQSLFNISKTYSRISGLTRMRPTKSGGIPPDAGDSGIRRRFLHKRAFFS) directs the protein to the chloroplast. 2 helical membrane-spanning segments follow: residues 223-243 (LWAGLGLIMAQTVGFFRLTFW) and 249-269 (VMEPICFYVTSTYFMAGYAFF). The short motif at 247 to 255 (WDVMEPICF) is the Selectivity filter element. Glu-251 serves as a coordination point for Ca(2+).

The protein belongs to the MCU (TC 1.A.77) family.

The protein resides in the plastid. It localises to the chloroplast membrane. It carries out the reaction Ca(2+)(in) = Ca(2+)(out). Functionally, chloroplastic membrane calcium uniporter that mediates calcium uptake into chloroplast stroma. Constitutes a pore-forming and calcium-conducting subunit. Chloroplastic calcium homeostasis plays key roles in cellular physiology. Promotes calcium uptake into chloroplast stroma in response to osmotic-stress, fine-tuning cytosolic MAPK3/MAPK6 phosphorylation and affecting stomata opening. The chain is Chloroplastic calcium uniporter protein from Arabidopsis thaliana (Mouse-ear cress).